The chain runs to 60 residues: Temporin-MT5 (60 aa).

An N-terminal signal peptide occupies residues 1 to 22 (MFTLKKPLLLLFFLATINLSLC). Residues 23–44 (EQERNAEEERRDEPDERNAEVE) constitute a propeptide, removed in mature form. F58 carries the phenylalanine amide modification.

The protein belongs to the frog skin active peptide (FSAP) family. Temporin subfamily. Expressed by the skin glands.

Its subcellular location is the secreted. Functionally, antimicrobial peptide. This chain is Temporin-MT5, found in Amolops mantzorum (Sichuan torrent frog).